Here is a 232-residue protein sequence, read N- to C-terminus: Orotate phosphoribosyltransferase (232 aa).

Residues Arg-107, Lys-108, Lys-111, and 133–141 (EDLTTDGGS) each bind 5-phospho-alpha-D-ribose 1-diphosphate. Thr-137 provides a ligand contact to orotate.

The protein belongs to the purine/pyrimidine phosphoribosyltransferase family. PyrE subfamily. In terms of assembly, homodimer. Mg(2+) serves as cofactor.

It carries out the reaction orotidine 5'-phosphate + diphosphate = orotate + 5-phospho-alpha-D-ribose 1-diphosphate. Its pathway is pyrimidine metabolism; UMP biosynthesis via de novo pathway; UMP from orotate: step 1/2. In terms of biological role, catalyzes the transfer of a ribosyl phosphate group from 5-phosphoribose 1-diphosphate to orotate, leading to the formation of orotidine monophosphate (OMP). The protein is Orotate phosphoribosyltransferase of Cereibacter sphaeroides (strain KD131 / KCTC 12085) (Rhodobacter sphaeroides).